The following is a 363-amino-acid chain: Peroxisomal (S)-2-hydroxyacid oxidase GLO3 (363 aa).

The FMN hydroxy acid dehydrogenase domain maps to 1–357 (MDQIVNVDEF…TRNHVRTENE (357 aa)). Residues 78-80 (PTG), Ser107, 128-130 (QIY), and Thr156 each bind FMN. Tyr130 contacts a 2-oxocarboxylate. Position 165 (Arg165) interacts with a 2-oxocarboxylate. FMN is bound by residues Lys228 and Ser250. The active-site Proton acceptor is His252. Arg255 contributes to the a 2-oxocarboxylate binding site. Residues 283–287 (DGGVR) and 306–307 (GR) contribute to the FMN site. Residues 361 to 363 (SML) carry the Microbody targeting signal motif.

The protein belongs to the FMN-dependent alpha-hydroxy acid dehydrogenase family. In terms of assembly, homotetramer. Requires FMN as cofactor.

Its subcellular location is the peroxisome. It catalyses the reaction a (2S)-2-hydroxycarboxylate + O2 = a 2-oxocarboxylate + H2O2. The catalysed reaction is 2-hydroxy-4-methylpentanoate + O2 = 4-methyl-2-oxopentanoate + H2O2. It carries out the reaction 2-hydroxyhexanoate + O2 = 2-oxohexanoate + H2O2. The enzyme catalyses 2-hydroxyoctanoate + O2 = 2-oxooctanoate + H2O2. Functionally, oxidase that catalyzes the oxidation of a broad range of 2-hydroxyacids to the corresponding 2-oxoacids, with a reduction of O2 to H2O2. Displays the highest activity with leucic acid (2-hydroxy-4-methylpentanoate) and has intermediate activity with 2-hydroxyhexanoate and 2-hydroxyoctanote. Shows lower activity with 2-hydroxydodecanoate, valic acid, and isoleucic acid and extremely low activity with glycolate and L-lactate. Cannot use 2-hydroxyhexadecanoate or D-lactate as substrates. May be involved in the conversion or degradation of 2-hydroxyacids produced during the metabolism of fatty acids or amino acids. The protein is Peroxisomal (S)-2-hydroxyacid oxidase GLO3 (GLO3) of Arabidopsis thaliana (Mouse-ear cress).